A 678-amino-acid chain; its full sequence is Nucleolar protein 9 (678 aa).

Over residues 1–15 the composition is skewed to basic residues; it reads MPRDKQKRGRRAEAK. Positions 1–24 are disordered; sequence MPRDKQKRGRRAEAKRKRDDVITD. 3 Pumilio repeats span residues 108-143, 291-334, and 382-419; these read EANG…RLFS, GLDN…SLLR, and KILV…SAMD. The segment at 477–496 is disordered; the sequence is QRSNQESDGTTSSSNTSSPE. Pumilio repeat units lie at residues 524-562 and 563-600; these read AVTT…QITS and RFSG…RFAE.

It is found in the nucleus. The protein localises to the nucleolus. Its function is as follows. RNA-binding nucleolar protein required for pre-rRNA processing. Involved in production of 18S rRNA and assembly of small ribosomal subunit. This Paracoccidioides brasiliensis (strain Pb18) protein is Nucleolar protein 9 (NOP9).